Reading from the N-terminus, the 808-residue chain is Dynamin-related protein 3A (808 aa).

The tract at residues 1–31 is disordered; the sequence is MTIEEVSGETPPSTPPSSSTPSPSSSTTNAA. Residues 16–28 are compositionally biased toward low complexity; the sequence is PSSSTPSPSSSTT. The region spanning 56 to 330 is the Dynamin-type G domain; sequence TIALPQVVVV…LVQHIKVLLP (275 aa). Residues 66–73 are G1 motif; the sequence is GSQSSGKS. 66-73 lines the GTP pocket; that stretch reads GSQSSGKS. The interval 92 to 94 is G2 motif; sequence CTR. The segment at 172-175 is G3 motif; the sequence is DLPG. GTP is bound by residues 172–176 and 241–244; these read DLPGI and TKLD. The segment at 241–244 is G4 motif; that stretch reads TKLD. The G5 motif stretch occupies residues 271 to 274; that stretch reads VNRC. The interval 548–578 is disordered; that stretch reads IPHPVARPKDTVEPDRTSSSTSQVKSRSFLG. Residues 554–563 are compositionally biased toward basic and acidic residues; that stretch reads RPKDTVEPDR. The span at 564–575 shows a compositional bias: low complexity; it reads TSSSTSQVKSRS. The GED domain occupies 670-761; it reads IQITKLLLRS…TLDELPLEAD (92 aa). The disordered stretch occupies residues 774-808; sequence LTSSKYSTSSSYSASPSTTRRSRRAGDQHQNGYGF. Over residues 775 to 792 the composition is skewed to low complexity; it reads TSSKYSTSSSYSASPSTT.

Belongs to the TRAFAC class dynamin-like GTPase superfamily. Dynamin/Fzo/YdjA family. In terms of assembly, homooligomer. Interacts with ARC5 on peroxisomes and ELM1 on mitochondria. As to expression, ubiquitous. Preferentially expressed in flowers.

The protein localises to the mitochondrion. It localises to the peroxisome. Involved in the control of mitochondrial and peroxisomal division and morphology. In association with PEX11C, PEX11D, PEX11E and FIS1B, is involved in cell cycle-associated constitutive self-replication of preexisting peroxisomes. This is Dynamin-related protein 3A (DRP3A) from Arabidopsis thaliana (Mouse-ear cress).